Consider the following 160-residue polypeptide: Transcription elongation factor GreA (160 aa).

The stretch at lysine 2–leucine 84 forms a coiled coil.

Belongs to the GreA/GreB family.

Necessary for efficient RNA polymerase transcription elongation past template-encoded arresting sites. The arresting sites in DNA have the property of trapping a certain fraction of elongating RNA polymerases that pass through, resulting in locked ternary complexes. Cleavage of the nascent transcript by cleavage factors such as GreA or GreB allows the resumption of elongation from the new 3'terminus. GreA releases sequences of 2 to 3 nucleotides. The protein is Transcription elongation factor GreA of Mesomycoplasma hyopneumoniae (strain 232) (Mycoplasma hyopneumoniae).